A 232-amino-acid polypeptide reads, in one-letter code: E3 ubiquitin-protein ligase RNF125 (232 aa).

The span at 1–10 (MGSVLSSDSG) shows a compositional bias: polar residues. Residues 1–27 (MGSVLSSDSGKSAPPSATPRALERRGD) form a disordered region. Residue Gly2 is the site of N-myristoyl glycine attachment. Positions 37 and 40 each coordinate Zn(2+). The segment at 37 to 76 (CAVCLEVLHQPVRTRCGHVFCRSCIATSLKNNKWTCPYCR) adopts an RING-type zinc-finger fold. The interval 43–45 (VLH) is interaction with the C2HC RNF-type zinc finger. Cys52, His54, Cys57, Cys60, Cys72, Cys75, Cys100, and Cys103 together coordinate Zn(2+). The C2HC RNF-type zinc-finger motif lies at 100 to 119 (CAECDTLVCLGEMRAHIRTC). The segment at 109–113 (LGEMR) is interaction with the RING-type zinc finger. 2 residues coordinate Zn(2+): His115 and Cys119. The interval 120–128 (QKYIDKYGP) is linker region. The tract at residues 210–224 (EEALIRRVLDRSLLE) is required for interaction with ubiquitin and for autoubiquitination.

In terms of assembly, interacts with UBE2D1. Interacts with VCP/p97; leading to recruit RNF125 to RIGI and promote ubiquitination of RIGI. Post-translationally, autoubiquitinated, leading to its subsequent proteasomal degradation.

It is found in the golgi apparatus membrane. It carries out the reaction S-ubiquitinyl-[E2 ubiquitin-conjugating enzyme]-L-cysteine + [acceptor protein]-L-lysine = [E2 ubiquitin-conjugating enzyme]-L-cysteine + N(6)-ubiquitinyl-[acceptor protein]-L-lysine.. It participates in protein modification; protein ubiquitination. Functionally, E3 ubiquitin-protein ligase that mediates ubiquitination and subsequent proteasomal degradation of target proteins, such as RIGI, MAVS/IPS1, IFIH1/MDA5, JAK1 and p53/TP53. Acts as a negative regulator of type I interferon production by mediating ubiquitination of RIGI at 'Lys-181', leading to RIGI degradation. Mediates ubiquitination and subsequent degradation of p53/TP53. Mediates ubiquitination and subsequent degradation of JAK1. Acts as a positive regulator of T-cell activation. The sequence is that of E3 ubiquitin-protein ligase RNF125 (RNF125) from Macaca fascicularis (Crab-eating macaque).